A 309-amino-acid polypeptide reads, in one-letter code: 2-phospho-L-lactate transferase (309 aa).

Asp50 and Lys89 together coordinate 7,8-didemethyl-8-hydroxy-5-deazariboflavin.

This sequence belongs to the CofD family. Homodimer. The cofactor is Mg(2+).

It catalyses the reaction (2S)-lactyl-2-diphospho-5'-guanosine + 7,8-didemethyl-8-hydroxy-5-deazariboflavin = oxidized coenzyme F420-0 + GMP + H(+). It participates in cofactor biosynthesis; coenzyme F420 biosynthesis. Functionally, catalyzes the transfer of the 2-phospholactate moiety from (2S)-lactyl-2-diphospho-5'-guanosine to 7,8-didemethyl-8-hydroxy-5-deazariboflavin (FO) with the formation of oxidized coenzyme F420-0 and GMP. The protein is 2-phospho-L-lactate transferase of Methanococcus maripaludis (strain C6 / ATCC BAA-1332).